We begin with the raw amino-acid sequence, 360 residues long: Photosystem II protein D1 1 (360 aa).

3 helical membrane passes run 29-46 (YVGWFGVLLIPTALTAAI), 118-133 (HFLIAIYAYMGRQWEL), and 142-156 (WIPVAFSAPVAAATA). His-118 contributes to the chlorophyll a binding site. Residue Tyr-126 coordinates pheophytin a. Residues Asp-170 and Glu-189 each coordinate [CaMn4O5] cluster. Residues 197–218 (FHMIGVAGVFGGALFSAMHGSL) form a helical membrane-spanning segment. His-198 serves as a coordination point for chlorophyll a. A quinone contacts are provided by residues His-215 and 264-265 (SF). His-215 contributes to the Fe cation binding site. A Fe cation-binding site is contributed by His-272. The chain crosses the membrane as a helical span at residues 274 to 288 (FLAAWPVIGIWFAAL). 4 residues coordinate [CaMn4O5] cluster: His-332, Glu-333, Asp-342, and Ala-344. A propeptide spanning residues 345–360 (SGEVQPIALAAPAIAS) is cleaved from the precursor.

This sequence belongs to the reaction center PufL/M/PsbA/D family. In terms of assembly, PSII is composed of 1 copy each of membrane proteins PsbA, PsbB, PsbC, PsbD, PsbE, PsbF, PsbH, PsbI, PsbJ, PsbK, PsbL, PsbM, PsbT, PsbX, PsbY, PsbZ, Psb30/Ycf12, peripheral proteins PsbO, CyanoQ (PsbQ), PsbU, PsbV and a large number of cofactors. It forms dimeric complexes. The cofactor is The D1/D2 heterodimer binds P680, chlorophylls that are the primary electron donor of PSII, and subsequent electron acceptors. It shares a non-heme iron and each subunit binds pheophytin, quinone, additional chlorophylls, carotenoids and lipids. D1 provides most of the ligands for the Mn4-Ca-O5 cluster of the oxygen-evolving complex (OEC). There is also a Cl(-1) ion associated with D1 and D2, which is required for oxygen evolution. The PSII complex binds additional chlorophylls, carotenoids and specific lipids.. In terms of processing, tyr-161 forms a radical intermediate that is referred to as redox-active TyrZ, YZ or Y-Z. C-terminally processed by CtpA; processing is essential to allow assembly of the oxygen-evolving complex and thus photosynthetic growth.

The protein resides in the cellular thylakoid membrane. It catalyses the reaction 2 a plastoquinone + 4 hnu + 2 H2O = 2 a plastoquinol + O2. Its function is as follows. Photosystem II (PSII) is a light-driven water:plastoquinone oxidoreductase that uses light energy to abstract electrons from H(2)O, generating O(2) and a proton gradient subsequently used for ATP formation. It consists of a core antenna complex that captures photons, and an electron transfer chain that converts photonic excitation into a charge separation. The D1/D2 (PsbA/PsbD) reaction center heterodimer binds P680, the primary electron donor of PSII as well as several subsequent electron acceptors. This is Photosystem II protein D1 1 from Trichormus variabilis (strain ATCC 29413 / PCC 7937) (Anabaena variabilis).